Reading from the N-terminus, the 305-residue chain is NK1 transcription factor-related protein 2 (305 aa).

Disordered stretches follow at residues 51–158 (EEVE…KPRR) and 210–257 (KWKK…PGAL). Positions 87–96 (SEAEEEEEAE) are enriched in acidic residues. Residues 97–115 (DAGRAHQPERWQGVHEGSP) are compositionally biased toward basic and acidic residues. Low complexity predominate over residues 129–140 (AEGLPASPGSPG). A DNA-binding region (homeobox) is located at residues 156–215 (PRRARTAFTYEQLVALENKFRATRYLSVCERLNLALSLSLTETQVKIWFQNRRTKWKKQN).

Belongs to the NK-1 homeobox family. In terms of assembly, interacts (via the homeodomain) with HIPK1, HIPK2, and HIPK3. Post-translationally, phosphorylated by HIPK2 in vitro. As to expression, expression detected in the brain, testis and spleen. In the testis, expressed in the germ cells of the seminiferous epithelium, predominantly in elongating spermatids and spermatozoa. Expressed throughout the brain with highest levels in regions of the cerebral cortex, hippocampus, diencephalon, pons, medulla and cerebellum.

The protein localises to the nucleus. Its subcellular location is the nucleolus. Transcriptional repressor. May play a role in early development as a Wnt/beta-catenin effector, hence controlling pluripotency and preimplantation development of embryonic stem cells. May promote adipogenesis in mesenchymal stem cells, possibly by inhibiting the expression of the antiadipogenic factor NR2F2. May inhibit osteoblastogenic differentiation. This is NK1 transcription factor-related protein 2 (Nkx1-2) from Mus musculus (Mouse).